The chain runs to 363 residues: Putative C-&gt;U-editing enzyme APOBEC-4 (363 aa).

The CMP/dCMP-type deaminase domain maps to 61 to 177; the sequence is PQTKHLTFYE…AWNREALRSL (117 aa). H93 lines the Zn(2+) pocket. E95 functions as the Proton donor in the catalytic mechanism. The Zn(2+) site is built by C127 and C134.

The protein belongs to the cytidine and deoxycytidylate deaminase family. It depends on Zn(2+) as a cofactor.

Putative C to U editing enzyme whose physiological substrate is not yet known. The protein is Putative C-&gt;U-editing enzyme APOBEC-4 (APOBEC4) of Macaca fascicularis (Crab-eating macaque).